Here is a 61-residue protein sequence, read N- to C-terminus: MSEDKGMKDKAKGLKDKVVGDAKDKFGKATDDKGKQVEGKAQKAKGEVEDKTGDAKKKLSE.

Positions 1 to 61 (MSEDKGMKDK…TGDAKKKLSE (61 aa)) are disordered.

Belongs to the UPF0337 (CsbD) family.

This is UPF0337 protein LMOf2365_2190 from Listeria monocytogenes serotype 4b (strain F2365).